A 162-amino-acid chain; its full sequence is Large ribosomal subunit protein uL15 (162 aa).

The segment covering 1-13 has biased composition (basic and acidic residues); that stretch reads MNLNELRDNEGSR. A disordered region spans residues 1 to 39; that stretch reads MNLNELRDNEGSRYRKKRLGRGIGSGKGKTSGRGVKGQK. Positions 21 to 35 are enriched in gly residues; the sequence is RGIGSGKGKTSGRGV.

It belongs to the universal ribosomal protein uL15 family. In terms of assembly, part of the 50S ribosomal subunit.

Functionally, binds to the 23S rRNA. The polypeptide is Large ribosomal subunit protein uL15 (Gluconobacter oxydans (strain 621H) (Gluconobacter suboxydans)).